Here is a 108-residue protein sequence, read N- to C-terminus: ATP synthase peripheral stalk subunit F6, mitochondrial (108 aa).

A mitochondrion-targeting transit peptide spans 1–32 (MILQRLFRLSSAVQSAISVSWRRNIGITAVAF). An N6-acetyllysine mark is found at Lys41, Lys46, and Lys79. N6-acetyllysine; alternate is present on residues Lys84 and Lys99. Residues Lys84 and Lys99 each carry the N6-succinyllysine; alternate modification. Lys105 is modified (N6-acetyllysine). Phosphoserine is present on Ser108.

It belongs to the eukaryotic ATPase subunit F6 family. Component of the ATP synthase complex composed at least of ATP5F1A/subunit alpha, ATP5F1B/subunit beta, ATP5MC1/subunit c (homooctomer), MT-ATP6/subunit a, MT-ATP8/subunit 8, ATP5ME/subunit e, ATP5MF/subunit f, ATP5MG/subunit g, ATP5MK/subunit k, ATP5MJ/subunit j, ATP5F1C/subunit gamma, ATP5F1D/subunit delta, ATP5F1E/subunit epsilon, ATP5PF/subunit F6, ATP5PB/subunit b, ATP5PD/subunit d, ATP5PO/subunit OSCP. ATP synthase complex consists of a soluble F(1) head domain (subunits alpha(3) and beta(3)) - the catalytic core - and a membrane F(0) domain - the membrane proton channel (subunits c, a, 8, e, f, g, k and j). These two domains are linked by a central stalk (subunits gamma, delta, and epsilon) rotating inside the F1 region and a stationary peripheral stalk (subunits F6, b, d, and OSCP).

The protein resides in the mitochondrion. It localises to the mitochondrion inner membrane. Its function is as follows. Subunit F6, of the mitochondrial membrane ATP synthase complex (F(1)F(0) ATP synthase or Complex V) that produces ATP from ADP in the presence of a proton gradient across the membrane which is generated by electron transport complexes of the respiratory chain. ATP synthase complex consist of a soluble F(1) head domain - the catalytic core - and a membrane F(1) domain - the membrane proton channel. These two domains are linked by a central stalk rotating inside the F(1) region and a stationary peripheral stalk. During catalysis, ATP synthesis in the catalytic domain of F(1) is coupled via a rotary mechanism of the central stalk subunits to proton translocation. In vivo, can only synthesize ATP although its ATP hydrolase activity can be activated artificially in vitro. Part of the complex F(0) domain. Part of the complex F(0) domain and the peripheric stalk, which acts as a stator to hold the catalytic alpha(3)beta(3) subcomplex and subunit a/ATP6 static relative to the rotary elements. In Bos taurus (Bovine), this protein is ATP synthase peripheral stalk subunit F6, mitochondrial.